We begin with the raw amino-acid sequence, 896 residues long: Desmocollin-3 (896 aa).

Positions 1 to 26 (MAAPGSGAPCAELCRQLLLTLVVFSF) are cleaved as a signal peptide. Residues 27–134 (ACEACKKEIF…KETVLRRSKR (108 aa)) constitute a propeptide that is removed on maturation. Cadherin domains are found at residues 135 to 242 (RWAP…HPIF), 243 to 354 (TEAV…LPTF), 355 to 471 (RQNA…GPEC), 472 to 579 (SPEV…EILQ), and 580 to 690 (DYLV…ILGK). Residues 135–690 (RWAPIPCSMQ…RRSADVILGK (556 aa)) lie on the Extracellular side of the membrane. An N-linked (GlcNAc...) asparagine glycan is attached at N165. N391, N546, and N629 each carry an N-linked (GlcNAc...) asparagine glycan. Residues 691 to 711 (WAILAILLGIALLFSILLTLV) traverse the membrane as a helical segment. Residues 712 to 896 (CGIVSARNKK…AALAKTCTKR (185 aa)) lie on the Cytoplasmic side of the membrane.

In terms of assembly, may form homodimers. Interacts with DSG1; there is evidence to suggest that the interaction promotes cell-cell adhesion of keratinocytes. Expressed in stratified epithelia only, such as the epidermis, tongue, esophagus and rumen (at protein level).

It is found in the cell membrane. It localises to the cell junction. Its subcellular location is the desmosome. The protein localises to the cytoplasm. In terms of biological role, a component of desmosome cell-cell junctions which are required for positive regulation of cellular adhesion. Required for cell-cell adhesion in the epidermis, as a result required for the maintenance of the dermal cohesion and the dermal barrier function. Required for cell-cell adhesion of epithelial cell layers surrounding the telogen hair club, as a result plays an important role in telogen hair shaft anchorage. Essential for successful completion of embryo compaction and embryo development. In Bos taurus (Bovine), this protein is Desmocollin-3 (DSC3).